The chain runs to 727 residues: MLRIPVRKALVGLSKSPKGCVRTTATAASNLIEVFVDGQSVMVEPGTTVLQACEKVGMQIPRFCYHERLSVAGNCRMCLVEIEKAPKVVAACAMPVMKGWNILTNSEKSKKAREGVMELLLANHPLDCPICDQGGECDLQDQSMMFGNDRSRFLEGKRAVEDKNIGPLVKTIMTRCIQCTRCIRFASEIAGVDDLGTTGRGNDMQVGTYIEKMFMSELSGNIIDICPVGALTSKPYAFTARPWETRKTESIDVMDAVGSNIVVSTRTGEVMRILPRMHEDINEEWISDKTRFAYDGLKRQRLTEPMVRNEKGLLTYTSWEDALSRVAGMLQSFQGKDVAAIAGGLVDAEALVALKDLLNRVDSDTLCTEEVFPTAGAGTDLRSNYLLNTTIAGVEEADVVLLVGTNPRFEAPLFNARIRKSWLHNDLKVALIGSPVDLTYTYDHLGDSPKILQDIASGSHPFSQVLKEAKKPMVVLGSSALQRNDGAAILAAFSSIAQKIRMTSGVTGDWKVMNILHRIASQVAALDLGYKPGVEAIRKNPPRLLFLLGADGGCITRQDLPKDCFIIYQGHHGDVGAPIADVILPGAAYTEKSATYVNTEGRAQQTKVAVTPPGLAREDWKIIRALSEIAGVTLPYDTLDQVRNRLEEVSPNLVRYDDIEGANYFQQANELSKLVNQQLLADPLVPPQLTIKDFYMTDSISRASQTMAKCVKAVTEGAQAVEEPSIC.

The transit peptide at 1–23 (MLRIPVRKALVGLSKSPKGCVRT) directs the protein to the mitochondrion. In terms of domain architecture, 2Fe-2S ferredoxin-type spans 30 to 108 (NLIEVFVDGQ…GWNILTNSEK (79 aa)). The [2Fe-2S] cluster site is built by Cys64, Cys75, and Cys78. Lys84 carries the post-translational modification N6-acetyllysine. Cys92 lines the [2Fe-2S] cluster pocket. One can recognise a 4Fe-4S His(Cys)3-ligated-type domain in the interval 108-147 (KSKKAREGVMELLLANHPLDCPICDQGGECDLQDQSMMFG). Residues His124, Cys128, Cys131, Cys137, Cys176, Cys179, Cys182, and Cys226 each coordinate [4Fe-4S] cluster. Positions 245-301 (TRKTESIDVMDAVGSNIVVSTRTGEVMRILPRMHEDINEEWISDKTRFAYDGLKRQR) constitute a 4Fe-4S Mo/W bis-MGD-type domain. An N6-acetyllysine mark is found at Lys467, Lys499, and Lys709.

This sequence belongs to the complex I 75 kDa subunit family. In terms of assembly, core subunit of respiratory chain NADH dehydrogenase (Complex I) which is composed of 45 different subunits. This is the largest subunit of complex I and it is a component of the iron-sulfur (IP) fragment of the enzyme. Complex I associates with ubiquinol-cytochrome reductase complex (Complex III) to form supercomplexes. Interacts with MDM2 and AKAP1. It depends on [2Fe-2S] cluster as a cofactor. [4Fe-4S] cluster is required as a cofactor.

It is found in the mitochondrion inner membrane. It catalyses the reaction a ubiquinone + NADH + 5 H(+)(in) = a ubiquinol + NAD(+) + 4 H(+)(out). In terms of biological role, core subunit of the mitochondrial membrane respiratory chain NADH dehydrogenase (Complex I) which catalyzes electron transfer from NADH through the respiratory chain, using ubiquinone as an electron acceptor. Essential for catalysing the entry and efficient transfer of electrons within complex I. Plays a key role in the assembly and stability of complex I and participates in the association of complex I with ubiquinol-cytochrome reductase complex (Complex III) to form supercomplexes. This is NADH-ubiquinone oxidoreductase 75 kDa subunit, mitochondrial (NDUFS1) from Pongo abelii (Sumatran orangutan).